We begin with the raw amino-acid sequence, 226 residues long: UPF0758 protein GTNG_2548 (226 aa).

The MPN domain occupies 104 to 226 (VIRCPEDGAK…FISLKEKGYV (123 aa)). Zn(2+)-binding residues include histidine 175, histidine 177, and aspartate 188. Positions 175 to 188 (HNHPSGDPTPSRED) match the JAMM motif motif.

It belongs to the UPF0758 family.

The sequence is that of UPF0758 protein GTNG_2548 from Geobacillus thermodenitrificans (strain NG80-2).